The chain runs to 101 residues: Small ribosomal subunit protein uS14 (101 aa).

Positions 36 to 72 (GTDESREAARAGIQRLPRDASPIRVRNRDGIDGRPRG) are disordered. Basic and acidic residues predominate over residues 61 to 70 (RNRDGIDGRP).

Belongs to the universal ribosomal protein uS14 family. Part of the 30S ribosomal subunit. Contacts proteins S3 and S10.

In terms of biological role, binds 16S rRNA, required for the assembly of 30S particles and may also be responsible for determining the conformation of the 16S rRNA at the A site. The sequence is that of Small ribosomal subunit protein uS14 from Clavibacter michiganensis subsp. michiganensis (strain NCPPB 382).